We begin with the raw amino-acid sequence, 304 residues long: Ribosomal RNA small subunit methyltransferase H (304 aa).

S-adenosyl-L-methionine is bound by residues 50–52, Asp-69, Phe-97, Asp-113, and Gln-120; that span reads GGH.

This sequence belongs to the methyltransferase superfamily. RsmH family.

The protein resides in the cytoplasm. It catalyses the reaction cytidine(1402) in 16S rRNA + S-adenosyl-L-methionine = N(4)-methylcytidine(1402) in 16S rRNA + S-adenosyl-L-homocysteine + H(+). Functionally, specifically methylates the N4 position of cytidine in position 1402 (C1402) of 16S rRNA. In Rippkaea orientalis (strain PCC 8801 / RF-1) (Cyanothece sp. (strain PCC 8801)), this protein is Ribosomal RNA small subunit methyltransferase H.